Here is a 341-residue protein sequence, read N- to C-terminus: Tryptophan--tRNA ligase (341 aa).

Residues arginine 11–threonine 13 and glycine 19–histidine 20 each bind ATP. The 'HIGH' region motif lies at proline 12–histidine 20. Residue aspartate 140 participates in L-tryptophan binding. ATP-binding positions include glycine 152–aspartate 154, leucine 193, and lysine 201–serine 205. The 'KMSKS' region signature appears at lysine 201–serine 205.

It belongs to the class-I aminoacyl-tRNA synthetase family. Homodimer.

Its subcellular location is the cytoplasm. The catalysed reaction is tRNA(Trp) + L-tryptophan + ATP = L-tryptophyl-tRNA(Trp) + AMP + diphosphate + H(+). Functionally, catalyzes the attachment of tryptophan to tRNA(Trp). This chain is Tryptophan--tRNA ligase, found in Clostridium longisporum.